Reading from the N-terminus, the 55-residue chain is uncharacterized protein (55 aa).

This is an uncharacterized protein from Acidianus hospitalis (AFV-1).